The following is a 442-amino-acid chain: Probable folate-biopterin transporter 7 (442 aa).

The next 12 membrane-spanning stretches (helical) occupy residues 23-43 (LGFG…ANFF), 64-82 (LPMV…VYFF), 87-107 (IPYI…IAFL), 114-134 (ILAL…VEVA), 158-178 (FVWM…GIAI), 184-204 (QSTF…TINI), 241-261 (IAWI…MFFY), 270-290 (ASLL…WGFA), 302-322 (KLLT…LLFV), 335-355 (VYVL…ILPF), 379-399 (IALA…FVGV), and 410-430 (GLAI…WIYD).

It belongs to the major facilitator superfamily. Folate-biopterin transporter (TC 2.A.71) family.

The protein resides in the membrane. Its function is as follows. Could mediate folate transport. This is Probable folate-biopterin transporter 7 from Arabidopsis thaliana (Mouse-ear cress).